Here is a 258-residue protein sequence, read N- to C-terminus: Isoprenyl transferase (258 aa).

The active site involves Asp38. Asp38 provides a ligand contact to Mg(2+). Substrate-binding positions include 39 to 42 (GNGR), Trp43, Arg51, His55, and 83 to 85 (STE). The active-site Proton acceptor is the Asn86. Substrate-binding positions include Trp87, Arg89, Arg206, and 212–214 (RIS). Residue Glu225 participates in Mg(2+) binding.

This sequence belongs to the UPP synthase family. As to quaternary structure, homodimer. The cofactor is Mg(2+).

Its function is as follows. Catalyzes the condensation of isopentenyl diphosphate (IPP) with allylic pyrophosphates generating different type of terpenoids. This chain is Isoprenyl transferase, found in Bacillus cereus (strain ATCC 10987 / NRS 248).